A 1003-amino-acid polypeptide reads, in one-letter code: Calcium-transporting ATPase sarcoplasmic/endoplasmic reticulum type (1003 aa).

Over 1-59 the chain is Cytoplasmic; that stretch reads MEDAHAKKWEEVVDYFGVDPERGLALEQVKKNQEKYGPNELPAEEGKSLLTLILEQFDD. The helical transmembrane segment at 60-78 threads the bilayer; sequence LLVKILLLAAIISLVLALF. The Extracellular segment spans residues 79-89; that stretch reads EEHDDEAEQLT. Residues 90-110 traverse the membrane as a helical segment; that stretch reads AYVEPFVILLILIANAVVGVW. Over 111 to 262 the chain is Cytoplasmic; it reads QEKNAESAIE…QQKLDEFGEQ (152 aa). A helical transmembrane segment spans residues 263 to 282; that stretch reads LSKVISVICVAVWAINIGHF. The Extracellular portion of the chain corresponds to 283–300; that stretch reads NDPAHGGSWIKGAIYYFK. The chain crosses the membrane as a helical span at residues 301–318; that stretch reads IAVALAVAAIPEGLPAVI. Over 319–775 the chain is Cytoplasmic; the sequence is TTCLALGTRR…RYLISSNIGE (457 aa). The active-site 4-aspartylphosphate intermediate is the D354. Residue K519 participates in ATP binding. The helical transmembrane segment at 776-799 threads the bilayer; that stretch reads VVSIFLTAALGLPEALIPVQLLWV. Over 800–840 the chain is Extracellular; sequence NLVTDGLPATALGFNPPDLDIMNKPPRRADEGLITGWLFFR. A helical transmembrane segment spans residues 841-863; sequence YMAIGTYVGAATVGAAAHWFMMS. At 864 to 898 the chain is on the cytoplasmic side; the sequence is PTGPGLNFYQLSHHLQCTPENEYFEGIDCEIFSDP. The chain crosses the membrane as a helical span at residues 899 to 917; that stretch reads HPMTMALSVLVTIEMLNAI. The Extracellular portion of the chain corresponds to 918-934; sequence NSLSENQSLLVMPPWSN. A helical membrane pass occupies residues 935-954; that stretch reads IWLISAICLSMTLHFVILYV. The Cytoplasmic portion of the chain corresponds to 955 to 1003; sequence EILSTVFQICPLTLTEWIVVLKISFPVLLLDEVLKFVARKYTDEFSFIK.

This sequence belongs to the cation transport ATPase (P-type) (TC 3.A.3) family.

Its subcellular location is the sarcoplasmic reticulum membrane. It carries out the reaction Ca(2+)(in) + ATP + H2O = Ca(2+)(out) + ADP + phosphate + H(+). In terms of biological role, this magnesium-dependent enzyme catalyzes the hydrolysis of ATP coupled with the transport of the calcium. In Artemia franciscana (Brine shrimp), this protein is Calcium-transporting ATPase sarcoplasmic/endoplasmic reticulum type.